We begin with the raw amino-acid sequence, 132 residues long: Proline-rich protein sgp2 (132 aa).

Positions 1 to 20 (MKYCFVFFVTLICLIANCSA) are cleaved as a signal peptide. Disordered stretches follow at residues 23-62 (EGDK…SNSR) and 87-132 (GASV…LGLP). Residues 36 to 47 (KQIERASDKTSE) are compositionally biased toward basic and acidic residues. Residues 51 to 62 (GNTNAQGDSNSR) are compositionally biased toward polar residues. A compositionally biased stretch (low complexity) spans 91 to 105 (PQLPDLPTTPSLPDM).

The protein localises to the secreted. This Glossina morsitans morsitans (Savannah tsetse fly) protein is Proline-rich protein sgp2 (sgp2).